Consider the following 200-residue polypeptide: 3-isopropylmalate dehydratase small subunit (200 aa).

The protein belongs to the LeuD family. LeuD type 1 subfamily. As to quaternary structure, heterodimer of LeuC and LeuD.

The catalysed reaction is (2R,3S)-3-isopropylmalate = (2S)-2-isopropylmalate. Its pathway is amino-acid biosynthesis; L-leucine biosynthesis; L-leucine from 3-methyl-2-oxobutanoate: step 2/4. In terms of biological role, catalyzes the isomerization between 2-isopropylmalate and 3-isopropylmalate, via the formation of 2-isopropylmaleate. This chain is 3-isopropylmalate dehydratase small subunit, found in Yersinia pseudotuberculosis serotype I (strain IP32953).